A 430-amino-acid chain; its full sequence is Putative ABC transporter periplasmic-binding protein YcjN (430 aa).

The signal sequence occupies residues 1-19 (MIKSKIVLLSALVSCALIS).

This sequence belongs to the bacterial solute-binding protein 1 family.

Its subcellular location is the periplasm. Functionally, probably part of the binding-protein-dependent transport system YcjNOP. This chain is Putative ABC transporter periplasmic-binding protein YcjN (ycjN), found in Escherichia coli (strain K12).